We begin with the raw amino-acid sequence, 119 residues long: Fluoride-specific ion channel FluC 2 (119 aa).

A helical transmembrane segment spans residues 46-66 (FALGLLTFAGVTGDAALLVGV). Residues Gly70 and Thr73 each contribute to the Na(+) site. A helical membrane pass occupies residues 96–116 (LNAVGNLACALVGIGLAWGIV).

It belongs to the fluoride channel Fluc/FEX (TC 1.A.43) family.

The protein resides in the cell membrane. It catalyses the reaction fluoride(in) = fluoride(out). Its activity is regulated as follows. Na(+) is not transported, but it plays an essential structural role and its presence is essential for fluoride channel function. Functionally, fluoride-specific ion channel. Important for reducing fluoride concentration in the cell, thus reducing its toxicity. The polypeptide is Fluoride-specific ion channel FluC 2 (Haloarcula marismortui (strain ATCC 43049 / DSM 3752 / JCM 8966 / VKM B-1809) (Halobacterium marismortui)).